The sequence spans 2437 residues: Neurogenic locus notch homolog protein 1 (2437 aa).

A signal peptide spans 1–20; sequence MNRFLVKLTLLTAASLATVA. 4 consecutive EGF-like domains span residues 21–57, 58–98, 101–138, and 139–175; these read QGQR…AQCQ, FPNP…RLCL, VNHA…KTCQ, and LADP…QTCR. Topologically, residues 21–1726 are extracellular; that stretch reads QGQRCSEYCQ…GGPPKTGEMY (1706 aa). 111 cysteine pairs are disulfide-bonded: C25–C35, C29–C45, C47–C56, C62–C73, C67–C86, C88–C97, C105–C116, C110–C126, C128–C137, C143–C154, C148–C163, C165–C174, C181–C194, C188–C203, C205–C214, C221–C232, C226–C242, C244–C253, C260–C271, C265–C280, C282–C291, C298–C311, C305–C320, C322–C331, C338–C349, C343–C358, C360–C369, C375–C386, C380–C397, C399–C408, C415–C428, C422–C437, C439–C448, C455–C466, C460–C475, C477–C486, C493–C503, C498–C512, C514–C523, C530–C541, C535–C550, C552–C561, C568–C578, C573–C587, C589–C598, C605–C616, C610–C625, C627–C636, C643–C653, C648–C662, C664–C673, C680–C691, C685–C700, C702–C711, C718–C728, C723–C737, C739–C748, C755–C766, C760–C775, C777–C786, C793–C804, C798–C813, C815–C824, C831–C842, C836–C853, C855–C864, C871–C882, C876–C891, C893–C902, C909–C920, C914–C929, C931–C940, C947–C958, C952–C967, C969–C978, C985–C996, C990–C1005, C1007–C1016, C1023–C1034, C1028–C1043, C1045–C1054, C1061–C1072, C1066–C1081, C1083–C1092, C1099–C1120, C1114–C1129, C1131–C1140, C1147–C1158, C1152–C1167, C1169–C1178, C1185–C1196, C1190–C1205, C1207–C1216, C1223–C1242, C1236–C1251, C1253–C1262, C1269–C1282, C1274–C1291, C1293–C1302, C1309–C1320, C1314–C1332, C1334–C1343, C1350–C1361, C1355–C1370, C1372–C1381, C1389–C1400, C1394–C1411, C1413–C1422, C1447–C1470, C1452–C1465, and C1461–C1477. Residues 177 to 215 form the EGF-like 5; calcium-binding domain; it reads DVNECAVSPSPCRNGGTCINEVGSYLCRCPPEYTGPHCQ. Residues 217–254 form the EGF-like 6 domain; the sequence is LYQPCLPSPCRSGGTCVQTSDTTHTCSCLPGFTGQTCE. The O-linked (Fuc...) threonine; alternate glycan is linked to T231. T231 carries O-linked (GalNAc...) threonine; alternate glycosylation. An EGF-like 7; calcium-binding domain is found at 256-292; sequence NVDDCTQHACENGGPCIDGINTYNCHCDKHWTGQYCT. One can recognise an EGF-like 8; calcium-binding domain in the interval 294–332; sequence DVDECELSPNACQNGGTCHNTIGGFHCVCVNGWTGDDCS. The EGF-like 9; calcium-binding domain occupies 334–370; the sequence is NIDDCASAACSHGATCHDRVASFFCECPHGRTGLLCH. The region spanning 371-409 is the EGF-like 10 domain; it reads LDDACISNPCQKGSNCDTNPVSGKAICTCPPGYTGSACN. In terms of domain architecture, EGF-like 11; calcium-binding spans 411–449; the sequence is DIDECSLGANPCEHGGRCLNTKGSFQCKCLQGYEGPRCE. One can recognise an EGF-like 12; calcium-binding domain in the interval 451 to 487; the sequence is DVNECKSNPCQNDATCLDQIGGFHCICMPGYEGVFCQ. Residues 489-524 enclose the EGF-like 13; calcium-binding domain; that stretch reads NSDDCASQPCLNGKCIDKINSFHCECPKGFSGSLCQ. An EGF-like 14; calcium-binding domain is found at 526-562; that stretch reads DVDECASTPCKNGAKCTDGPNKYTCECTPGFSGIHCE. The EGF-like 15; calcium-binding domain occupies 564–599; it reads DINECASSPCHYGVCRDGVASFTCDCRPGYTGRLCE. An EGF-like 16; calcium-binding domain is found at 601–637; it reads NINECLSQPCRNGGTCQDRENAYICTCPKGTTGVNCE. One can recognise an EGF-like 17; calcium-binding domain in the interval 639 to 674; it reads NIDDCKRKPCDYGKCIDKINGYECVCEPGYSGSMCN. Residues 676–712 form the EGF-like 18; calcium-binding domain; that stretch reads NIDDCALNPCHNGGTCIDGVNSFTCLCPDGFRDATCL. One can recognise an EGF-like 19; calcium-binding domain in the interval 714-749; it reads QHNECSSNPCIHGSCLDQINSYRCVCEAGWMGRNCD. The region spanning 751–787 is the EGF-like 20; calcium-binding domain; the sequence is NINECLSNPCVNGGTCKDMTSGYLCTCRAGFSGPNCQ. The region spanning 789–825 is the EGF-like 21; calcium-binding domain; the sequence is NINECASNPCLNQGSCIDDVAGFKCNCMLPYTGEVCE. Residues 827–865 form the EGF-like 22 domain; sequence VLAPCSPRPCKNGGVCRESEDFQSFSCNCPAGWQGQTCE. Residues 867 to 903 form the EGF-like 23; calcium-binding domain; the sequence is DINECVRNPCTNGGVCENLRGGFQCRCNPGFTGALCE. Positions 905–941 constitute an EGF-like 24; calcium-binding domain; the sequence is DIDDCEPNPCSNGGVCQDRVNGFVCVCLAGFRGERCA. The 37-residue stretch at 943–979 folds into the EGF-like 25; calcium-binding domain; the sequence is DIDECVSAPCRNGGNCTDCVNSYTCSCPAGFSGINCE. N957 carries an N-linked (GlcNAc...) asparagine glycan. In terms of domain architecture, EGF-like 26 spans 981 to 1017; it reads NTPDCTESSCFNGGTCVDGISSFSCVCLPGFTGNYCQ. An EGF-like 27; calcium-binding domain is found at 1019–1055; sequence DVNECDSRPCQNGGSCQDGYGTYKCTCPHGYTGLNCQ. 2 consecutive EGF-like domains span residues 1057–1093 and 1095–1141; these read LVRW…IYCD and PSVS…SYCQ. The 37-residue stretch at 1143–1179 folds into the EGF-like 30; calcium-binding domain; that stretch reads QVDECQPNPCQNGATCTDYLGGYSCECVPGYHGMNCS. N-linked (GlcNAc...) asparagine glycosylation occurs at N1177. An EGF-like 31; calcium-binding domain is found at 1181 to 1217; that stretch reads EINECLSQPCQNGGTCIDLVNTYKCSCPRGTQGVHCE. The region spanning 1219-1263 is the EGF-like 32; calcium-binding domain; sequence DIDDCSPSVDPLTGEPRCFNGGRCVDRVGGYGCVCPAGFVGERCE. EGF-like domains follow at residues 1265 to 1303, 1305 to 1344, 1346 to 1382, and 1385 to 1423; these read DVNE…KRCE, VFNG…SSCE, DSQS…HECQ, and MDSP…LLCH. An O-linked (Fuc...) threonine; alternate glycan is attached at T1399. T1399 is a glycosylation site (O-linked (GalNAc...) threonine; alternate). 3 LNR repeats span residues 1447–1487, 1488–1525, and 1526–1566; these read CEIA…PWQN, CSAA…LEGQ, and CNPL…VPQK. N1487 carries N-linked (GlcNAc...) asparagine glycosylation. Cystine bridges form between C1488–C1512, C1494–C1507, C1503–C1519, C1526–C1552, C1534–C1547, and C1543–C1559. A glycan (N-linked (GlcNAc...) asparagine) is linked at N1585. A helical transmembrane segment spans residues 1727–1747; that stretch reads PMFLVLLALAVLALAAVGVVV. The Cytoplasmic portion of the chain corresponds to 1748-2437; it reads SRKRKREHGQ…QMNHIPEAFK (690 aa). The disordered stretch occupies residues 1770–1790; it reads KKKRREPVGEDSVGLKPLKNS. ANK repeat units lie at residues 1867-1910, 1915-1944, 1948-1978, 1982-2011, 2015-2044, and 2048-2077; these read DGFT…NLHN, TGET…DANV, MGRT…DLDA, DGTT…DPNA, SGKS…NKDL, and KEET…NRDI. 2 disordered regions span residues 2127–2174 and 2356–2437; these read IKPS…GGIM and RMAP…EAFK. The segment covering 2356 to 2387 has biased composition (polar residues); that stretch reads RMAPPISSTQFLTPPSQHSYSNPMDNTPNHQQ. Over residues 2396 to 2411 the composition is skewed to low complexity; the sequence is PSAGSPDQWSSSSPHS. The segment covering 2412–2429 has biased composition (polar residues); it reads NLSDWSEGISSPPTSMQM.

It belongs to the NOTCH family. Post-translationally, synthesized in the endoplasmic reticulum as an inactive form which is proteolytically cleaved by a furin-like convertase in the trans-Golgi network before it reaches the plasma membrane to yield an active, ligand-accessible form. Cleavage results in a C-terminal fragment N(TM) and a N-terminal fragment N(EC). Following ligand binding, it is cleaved by adam17 to yield a membrane-associated intermediate fragment called notch extracellular truncation (NEXT). Following endocytosis, this fragment is then cleaved by presenilin dependent gamma-secretase to release a Notch-derived peptide containing the intracellular domain (NICD) from the membrane. In terms of processing, O-glycosylated on the EGF-like domains. Contains both O-linked fucose and O-linked glucose. O-linked glycosylation by galnt11 is involved in determination of left/right symmetry: glycosylation promotes activation of notch1, possibly by promoting cleavage by adam17, modulating the balance between motile and immotile (sensory) cilia at the left-right organiser (LRO).

The protein resides in the cell membrane. It localises to the nucleus. Functions as a receptor for membrane-bound ligands Jagged-1 (JAG1), Jagged-2 (JAG2) and Delta-1 (DLL1) to regulate cell-fate determination. Upon ligand activation through the released notch intracellular domain (NICD) it forms a transcriptional activator complex with RBPJ/RBPSUH and activates genes of the enhancer of split locus. Affects the implementation of differentiation, proliferation and apoptotic programs. Involved in angiogenesis; negatively regulates endothelial cell proliferation and migration and angiogenic sprouting. Involved in the maturation of both CD4(+) and CD8(+) cells in the thymus. Important for follicular differentiation and possibly cell fate selection within the follicle. During cerebellar development, functions as a receptor for neuronal DNER and is involved in the differentiation of Bergmann glia. Represses neuronal and myogenic differentiation. May play an essential role in postimplantation development, probably in some aspect of cell specification and/or differentiation. May be involved in mesoderm development, somite formation and neurogenesis. Involved in determination of left/right symmetry by modulating the balance between motile and immotile (sensory) cilia at the left-right organiser (LRO). This Danio rerio (Zebrafish) protein is Neurogenic locus notch homolog protein 1 (notch1a).